The following is a 449-amino-acid chain: Phosphoglucosamine mutase (449 aa).

Residue S101 is the Phosphoserine intermediate of the active site. 4 residues coordinate Mg(2+): S101, D241, D243, and D245. Position 101 is a phosphoserine (S101).

The protein belongs to the phosphohexose mutase family. Requires Mg(2+) as cofactor. Post-translationally, activated by phosphorylation.

The enzyme catalyses alpha-D-glucosamine 1-phosphate = D-glucosamine 6-phosphate. Its function is as follows. Catalyzes the conversion of glucosamine-6-phosphate to glucosamine-1-phosphate. In Acetivibrio thermocellus (strain ATCC 27405 / DSM 1237 / JCM 9322 / NBRC 103400 / NCIMB 10682 / NRRL B-4536 / VPI 7372) (Clostridium thermocellum), this protein is Phosphoglucosamine mutase.